We begin with the raw amino-acid sequence, 538 residues long: NAD(P)H-quinone oxidoreductase chain 4 (538 aa).

14 helical membrane passes run 11–31, 43–63, 95–115, 119–139, 143–163, 175–195, 217–237, 251–271, 285–305, 314–334, 340–360, 382–404, 425–445, and 472–492; these read FPWL…VPFI, YALI…FKGF, MPLI…AWPV, PKLF…VFAV, LLFF…LAIW, FIIY…AMGF, GFQL…LPIV, TAPV…YALL, FAPL…LTSF, IAYS…SFSS, AMLQ…LVGA, IMFA…SGFI, IVVA…LLSM, and IYII…PKIM.

The protein belongs to the complex I subunit 4 family.

The protein localises to the cellular thylakoid membrane. The enzyme catalyses a plastoquinone + NADH + (n+1) H(+)(in) = a plastoquinol + NAD(+) + n H(+)(out). The catalysed reaction is a plastoquinone + NADPH + (n+1) H(+)(in) = a plastoquinol + NADP(+) + n H(+)(out). NDH-1 shuttles electrons from NAD(P)H, via FMN and iron-sulfur (Fe-S) centers, to quinones in the respiratory chain. The immediate electron acceptor for the enzyme in this species is believed to be plastoquinone. Couples the redox reaction to proton translocation (for every two electrons transferred, four hydrogen ions are translocated across the cytoplasmic membrane), and thus conserves the redox energy in a proton gradient. The polypeptide is NAD(P)H-quinone oxidoreductase chain 4 (Prochlorococcus marinus (strain NATL1A)).